The sequence spans 423 residues: Testican-2 (423 aa).

An N-terminal signal peptide occupies residues 1–22; it reads MRAPGSGRLALPLLLLAVVALA. S72 is modified (phosphoserine). Cystine bridges form between C90-C101, C95-C111, C136-C166, C139-C159, and C148-C180. One can recognise a Kazal-like domain in the interval 130-182; sequence GGKDSVCKPCHMAQLASVCGSDGHTYSSVCKLEQQACLSSKQLAVRCEGPCPC. N-linked (GlcNAc...) asparagine glycosylation is present at N225. The 67-residue stretch at 309 to 375 folds into the Thyroglobulin type-1 domain; that stretch reads KPPCLAELER…GTRMHGTPDC (67 aa). 3 disulfides stabilise this stretch: C312-C336, C347-C354, and C356-C375. 2 O-linked (Xyl...) (glycosaminoglycan) serine glycosylation sites follow: S382 and S387. Residues 387 to 423 are disordered; sequence SGVGWEDEEEKETEEAGEEAEEEEGEAGEADDGGYIW. The span at 391–423 shows a compositional bias: acidic residues; sequence WEDEEEKETEEAGEEAEEEEGEAGEADDGGYIW.

Post-translationally, O-glycosylated; contains chondroitin sulfate and heparan sulfate. As to expression, brain specific.

It localises to the secreted. It is found in the extracellular space. The protein localises to the extracellular matrix. Its function is as follows. May participate in diverse steps of neurogenesis. Binds calcium. In Mus musculus (Mouse), this protein is Testican-2 (Spock2).